A 139-amino-acid polypeptide reads, in one-letter code: Probable disulfide formation protein C 2 (139 aa).

A helical transmembrane segment spans residues 6-25; it reads KYHIAIAWMIATSAMLISLF. A disulfide bridge connects residues C35 and C38. Transmembrane regions (helical) follow at residues 40 to 59 and 66 to 83; these read YQRM…MYRK and YAFP…YQIT. C95 and C101 form a disulfide bridge. A helical membrane pass occupies residues 110–133; the sequence is GFISIPMLSFIGFLVIIILIYIES.

It belongs to the DsbB family. BdbC subfamily.

The protein localises to the cell membrane. Required for disulfide bond formation in some proteins. This Bacillus cereus (strain ATCC 10987 / NRS 248) protein is Probable disulfide formation protein C 2 (bdbC2).